Consider the following 1209-residue polypeptide: Calcium-activated potassium channel subunit alpha-1 (1209 aa).

Residues 1 to 26 show a composition bias toward gly residues; that stretch reads MANGGGGGGGGSSGSSGGGGGGGGGE. 2 disordered regions span residues 1–29 and 42–64; these read MANG…ETAL and LDAS…SVHE. Residues 1–87 are Extracellular-facing; the sequence is MANGGGGGGG…VPCDSRGQRM (87 aa). Residues 45–61 show a composition bias toward low complexity; it reads SSSSSSSSSSSSSSSSS. A helical transmembrane segment spans residues 88 to 108; it reads WWAFLASSMVTFFGGLFIILL. Residues 109-179 are Cytoplasmic-facing; it reads WRTLKYLWTV…MISAQTLTGR (71 aa). S-palmitoyl cysteine attachment occurs at residues cysteine 119, cysteine 120, and cysteine 122. A helical transmembrane segment spans residues 180 to 200; that stretch reads VLVVLVFALSIGALVIYFIDS. Over 201–215 the chain is Extracellular; that stretch reads SNPIESCQNFYKDFT. A helical membrane pass occupies residues 216-236; the sequence is LQIDMAFNVFFLLYFGLRFIA. Topologically, residues 237–240 are cytoplasmic; sequence ANDK. The chain crosses the membrane as a helical span at residues 241–261; the sequence is LWFWLEVNSVVDFFTVPPVFV. Topologically, residues 262-265 are extracellular; the sequence is SVYL. The helical; Voltage-sensor transmembrane segment at 266 to 286 threads the bilayer; that stretch reads NRSWLGLRFLRALRLIQFSEI. Residues 287–301 lie on the Cytoplasmic side of the membrane; the sequence is LQFLNILKTSNSIKL. A helical transmembrane segment spans residues 302–322; that stretch reads VNLLSIFISTWLTAAGFIHLV. Over 323 to 336 the chain is Extracellular; sequence ENSGDPWENFQNNQ. The segment at residues 337-359 is an intramembrane region (pore-forming); it reads ALTYWECVYLLMVTMSTVGYGDV. Residues 353 to 356 carry the Selectivity for potassium motif; it reads TVGY. Residues 360–368 are Extracellular-facing; it reads YAKTTLGRL. A helical transmembrane segment spans residues 369–389; the sequence is FMVFFILGGLAMFASYVPEII. Over 390–1209 the chain is Cytoplasmic; sequence ELIGNRKKYG…DKQKKEMVYR (820 aa). The region spanning 408 to 550 is the RCK N-terminal 1 domain; the sequence is RKHIVVCGHI…WNWKEGDDAI (143 aa). Mg(2+) is bound by residues glutamate 440, glutamine 463, and glutamate 465. Residues 557 to 577 form a segment S7 region; it reads LGFIAQSCLAQGLSTMLANLF. Residues 614–634 form a segment S8 region; that stretch reads LSFPTVCELCFVKLKLLMIAI. Residues 682-686 form a heme-binding motif region; that stretch reads CKACH. Residues 704–734 form a disordered region; it reads EDEQPPTLSPKKKQRNGGMRNSPNTSPKLMR. Threonine 710 carries the post-translational modification Phosphothreonine. Serine 712, serine 725, and serine 729 each carry phosphoserine. The tract at residues 784–804 is segment S9; sequence VLSGHVVVCIFGDVSSALIGL. The 145-residue stretch at 786–930 folds into the RCK N-terminal 2 domain; the sequence is SGHVVVCIFG…MDRSSPDNSP (145 aa). Threonine 917 is subject to Phosphothreonine. A phosphoserine mark is found at serine 925 and serine 929. A Calcium bowl motif is present at residues 977-999; it reads TELVNDTNVQFLDQDDDDDPDTE. Glutamine 986, aspartate 989, aspartate 992, and aspartate 994 together coordinate Ca(2+). Positions 1006–1026 are segment S10; the sequence is FACGTAFAVSVLDSLMSATYF. Positions 1160–1185 are enriched in low complexity; it reads RASLSHSSHSSQSSSKKSSSVHSIPS. The interval 1160–1209 is disordered; the sequence is RASLSHSSHSSQSSSKKSSSVHSIPSTANRPNRPKSRESRDKQKKEMVYR. The span at 1194–1209 shows a compositional bias: basic and acidic residues; that stretch reads KSRESRDKQKKEMVYR. Phosphoserine occurs at positions 1195 and 1198.

The protein belongs to the potassium channel family. Calcium-activated (TC 1.A.1.3) subfamily. KCa1.1/KCNMA1 sub-subfamily. Homotetramer; which constitutes the calcium-activated potassium channel. Interacts with beta subunits KCNMB1, KCNMB2, KCNMB3 and KCNMB4. Interacts with gamma subunits LRRC26, LRRC38, LRRC52 and LRRC55. Beta and gamma subunits are accessory, and modulate its activity. Interacts with RAB11B. Phosphorylated. Phosphorylation by kinases such as PKA and/or PKG. In smooth muscles, phosphorylation affects its activity. In terms of processing, palmitoylation by ZDHHC22 and ZDHHC23 within the intracellular linker between the S0 and S1 transmembrane domains regulates localization to the plasma membrane. Depalmitoylated by LYPLA1 and LYPLAL1, leading to retard exit from the trans-Golgi network.

Its subcellular location is the cell membrane. The protein localises to the endoplasmic reticulum membrane. It carries out the reaction K(+)(in) = K(+)(out). Its activity is regulated as follows. Ethanol and carbon monoxide-bound heme increase channel activation. With respect to regulation, heme inhibits channel activation. In terms of biological role, potassium channel activated by both membrane depolarization or increase in cytosolic Ca(2+) that mediates export of K(+). It is also activated by the concentration of cytosolic Mg(2+). Its activation dampens the excitatory events that elevate the cytosolic Ca(2+) concentration and/or depolarize the cell membrane. It therefore contributes to repolarization of the membrane potential. Plays a key role in controlling excitability in a number of systems, such as regulation of the contraction of smooth muscle, the tuning of hair cells in the cochlea, regulation of transmitter release, and innate immunity. In smooth muscles, its activation by high level of Ca(2+), caused by ryanodine receptors in the sarcoplasmic reticulum, regulates the membrane potential. In cochlea cells, its number and kinetic properties partly determine the characteristic frequency of each hair cell and thereby helps to establish a tonotopic map. Kinetics of KCNMA1 channels are determined by alternative splicing, phosphorylation status and its combination with modulating beta subunits. Highly sensitive to both iberiotoxin (IbTx) and charybdotoxin (CTX). Functionally, potassium channel activated by both membrane depolarization or increase in cytosolic Ca(2+) that mediates export of K(+). This chain is Calcium-activated potassium channel subunit alpha-1 (Kcnma1), found in Rattus norvegicus (Rat).